The sequence spans 333 residues: Holliday junction branch migration complex subunit RuvB (333 aa).

The interval 1–182 is large ATPase domain (RuvB-L); that stretch reads MEERMVSAEA…FGVMARLEYY (182 aa). ATP-binding positions include Ile-21, Arg-22, Gly-63, Lys-66, Thr-67, Thr-68, 129–131, Arg-172, Tyr-182, and Arg-219; that span reads EDY. Thr-67 lines the Mg(2+) pocket. A small ATPAse domain (RuvB-S) region spans residues 183–253; sequence NVEELTTIIE…RAIESLERLQ (71 aa). A head domain (RuvB-H) region spans residues 256 to 333; the sequence is RLGLDHIDHK…EHFNMEVPNK (78 aa). Arg-311 and Arg-316 together coordinate DNA.

The protein belongs to the RuvB family. Homohexamer. Forms an RuvA(8)-RuvB(12)-Holliday junction (HJ) complex. HJ DNA is sandwiched between 2 RuvA tetramers; dsDNA enters through RuvA and exits via RuvB. An RuvB hexamer assembles on each DNA strand where it exits the tetramer. Each RuvB hexamer is contacted by two RuvA subunits (via domain III) on 2 adjacent RuvB subunits; this complex drives branch migration. In the full resolvosome a probable DNA-RuvA(4)-RuvB(12)-RuvC(2) complex forms which resolves the HJ.

Its subcellular location is the cytoplasm. The catalysed reaction is ATP + H2O = ADP + phosphate + H(+). In terms of biological role, the RuvA-RuvB-RuvC complex processes Holliday junction (HJ) DNA during genetic recombination and DNA repair, while the RuvA-RuvB complex plays an important role in the rescue of blocked DNA replication forks via replication fork reversal (RFR). RuvA specifically binds to HJ cruciform DNA, conferring on it an open structure. The RuvB hexamer acts as an ATP-dependent pump, pulling dsDNA into and through the RuvAB complex. RuvB forms 2 homohexamers on either side of HJ DNA bound by 1 or 2 RuvA tetramers; 4 subunits per hexamer contact DNA at a time. Coordinated motions by a converter formed by DNA-disengaged RuvB subunits stimulates ATP hydrolysis and nucleotide exchange. Immobilization of the converter enables RuvB to convert the ATP-contained energy into a lever motion, pulling 2 nucleotides of DNA out of the RuvA tetramer per ATP hydrolyzed, thus driving DNA branch migration. The RuvB motors rotate together with the DNA substrate, which together with the progressing nucleotide cycle form the mechanistic basis for DNA recombination by continuous HJ branch migration. Branch migration allows RuvC to scan DNA until it finds its consensus sequence, where it cleaves and resolves cruciform DNA. The sequence is that of Holliday junction branch migration complex subunit RuvB from Halalkalibacterium halodurans (strain ATCC BAA-125 / DSM 18197 / FERM 7344 / JCM 9153 / C-125) (Bacillus halodurans).